Reading from the N-terminus, the 725-residue chain is NAD(+) hydrolase SARM1 (725 aa).

Residues 1 to 27 (MVLTILFSAYKLCRFFAMSSPRPGAER) constitute a mitochondrion transit peptide. The stretch at 60-100 (EVQGALERALPELQQALSALKQAGGGRAVGAGLAEVFQLVE) is one ARM 1 repeat. NAD(+) contacts are provided by residues Trp103, Arg110, 149–158 (EQILVAENRR), and 191–194 (HMFK). 7 ARM repeats span residues 114–153 (QGLC…QILV), 155–194 (ENRR…HMFK), 197–236 (EETC…NCAM), 238–281 (GGQA…LATN), 282–315 (KEVE…CLVD), 316–355 (ASDT…AEAV), and 360–403 (KNRN…EEVP). SAM domains are found at residues 413-477 (WKEA…LKTF) and 483-549 (CDRS…MLHS). Phosphoserine is present on residues Ser549 and Ser559. One can recognise a TIR domain in the interval 561–704 (DVPDVFISYR…KIIRFLQGRS (144 aa)). Residues 570–571 (RR) and Glu600 contribute to the NAD(+) site. The active site involves Glu643. The disordered stretch occupies residues 705-725 (SRDSSAGSDTSLEGAAPMGPT).

The protein belongs to the SARM1 family. In terms of assembly, homooctamer; forms an octameric ring via SAM domains. Interacts with TICAM1/TRIF and thereby interferes with TICAM1/TRIF function. Interacts with MAPK10/JNK3 and SDC2 (via cytoplasmic domain). Post-translationally, phosphorylation at Ser-549 by JNK kinases (MAPK8, MAPK9 and /or MAPK10) enhance the NAD(+) hydrolase (NADase) activity. Phosphorylation at Ser-549 and subsequent activation takes place in response to oxidative stress conditions and inhibits mitochondrial respiration. In terms of tissue distribution, highest expression seen in the spleen and the brain, followed by lung, kidney, liver and other tissues.

The protein localises to the cytoplasm. It is found in the cell projection. Its subcellular location is the axon. The protein resides in the dendrite. It localises to the synapse. The protein localises to the mitochondrion. It carries out the reaction NAD(+) + H2O = ADP-D-ribose + nicotinamide + H(+). It catalyses the reaction NAD(+) = cyclic ADP-beta-D-ribose + nicotinamide + H(+). The catalysed reaction is NADP(+) + H2O = ADP-D-ribose 2'-phosphate + nicotinamide + H(+). Its activity is regulated as follows. Autoinhibited: in the inactive state, the enzymatic TIR domain is held apart by the autoinhibiting ARM repeats. NAD(+)-binding to ARM repeats maintains an inactive state by promoting interaction between ARM repeats and the TIR domain, thereby facilitating inhibition of the enzymatic TIR domain. Following activation, possibly by nicotinamide mononucleotide (NMN), auto-inhibitory interactions are released, allowing self-association of the TIR domains and subsequent activation of the NAD(+) hydrolase (NADase) activity. Self-association of TIR domains is facilitated by the octamer of SAM domains. In terms of biological role, NAD(+) hydrolase, which plays a key role in axonal degeneration following injury by regulating NAD(+) metabolism. Acts as a negative regulator of MYD88- and TRIF-dependent toll-like receptor signaling pathway by promoting Wallerian degeneration, an injury-induced form of programmed subcellular death which involves degeneration of an axon distal to the injury site. Wallerian degeneration is triggered by NAD(+) depletion: in response to injury, SARM1 is activated and catalyzes cleavage of NAD(+) into ADP-D-ribose (ADPR), cyclic ADPR (cADPR) and nicotinamide; NAD(+) cleavage promoting cytoskeletal degradation and axon destruction. Also able to hydrolyze NADP(+), but not other NAD(+)-related molecules. Can activate neuronal cell death in response to stress. Regulates dendritic arborization through the MAPK4-JNK pathway. Involved in innate immune response: inhibits both TICAM1/TRIF- and MYD88-dependent activation of JUN/AP-1, TRIF-dependent activation of NF-kappa-B and IRF3, and the phosphorylation of MAPK14/p38. This chain is NAD(+) hydrolase SARM1, found in Sus scrofa (Pig).